An 81-amino-acid chain; its full sequence is Escargot/snail protein homolog (81 aa).

4 consecutive C2H2-type zinc fingers follow at residues 1–5, 17–39, 43–65, and 71–81; these read HQQFH, FSCKYCEKVYVSLGALKMHIRTH, CKCHLCGKAFSRPWLLQGHIRTH, and FSCQHCNRAFA.

This sequence belongs to the snail C2H2-type zinc-finger protein family.

It is found in the nucleus. The protein is Escargot/snail protein homolog of Apis mellifera (Honeybee).